The sequence spans 53 residues: Rubredoxin (53 aa).

In terms of domain architecture, Rubredoxin-like spans 1 to 53 (MQKFECTLCGYIYDPALVGPDTPDQDGAFEDVSENWVCPLCGAGKEDFEVYED). Positions 6, 9, 38, and 41 each coordinate Fe cation.

The protein belongs to the rubredoxin family. Requires Fe(3+) as cofactor.

In terms of biological role, rubredoxin is a small nonheme, iron protein lacking acid-labile sulfide. Its single Fe, chelated to 4 Cys, functions as an electron acceptor and may also stabilize the conformation of the molecule. The chain is Rubredoxin from Peptoniphilus asaccharolyticus (Peptostreptococcus asaccharolyticus).